A 29-amino-acid chain; its full sequence is Cycloviolacin-O21 (29 aa).

The segment at residues 1-29 is a cross-link (cyclopeptide (Gly-Asn)); the sequence is GLPVCGETCVTGSCYTPGCTCSWPVCTRN. 3 disulfides stabilise this stretch: Cys5-Cys19, Cys9-Cys21, and Cys14-Cys26.

In terms of processing, this is a cyclic peptide. As to expression, expressed in leaves, petals, petioles, and runners but not in roots (at protein level).

Probably participates in a plant defense mechanism. The sequence is that of Cycloviolacin-O21 from Viola odorata (Sweet violet).